The primary structure comprises 194 residues: Holliday junction branch migration complex subunit RuvA (194 aa).

The tract at residues 1–64 (MISRLTGKLV…EDAHLLFGFA (64 aa)) is domain I. A domain II region spans residues 65–143 (TAEERKTFRQ…AHAVTDGLFA (79 aa)). Residues 144–147 (AAPA) are flexible linker. Positions 147 to 194 (AADETEDIVGTLLALGYSEREAKAAVKGVPKGTDVGEGVRLALKNLLK) are domain III.

The protein belongs to the RuvA family. In terms of assembly, homotetramer. Forms an RuvA(8)-RuvB(12)-Holliday junction (HJ) complex. HJ DNA is sandwiched between 2 RuvA tetramers; dsDNA enters through RuvA and exits via RuvB. An RuvB hexamer assembles on each DNA strand where it exits the tetramer. Each RuvB hexamer is contacted by two RuvA subunits (via domain III) on 2 adjacent RuvB subunits; this complex drives branch migration. In the full resolvosome a probable DNA-RuvA(4)-RuvB(12)-RuvC(2) complex forms which resolves the HJ.

The protein resides in the cytoplasm. The RuvA-RuvB-RuvC complex processes Holliday junction (HJ) DNA during genetic recombination and DNA repair, while the RuvA-RuvB complex plays an important role in the rescue of blocked DNA replication forks via replication fork reversal (RFR). RuvA specifically binds to HJ cruciform DNA, conferring on it an open structure. The RuvB hexamer acts as an ATP-dependent pump, pulling dsDNA into and through the RuvAB complex. HJ branch migration allows RuvC to scan DNA until it finds its consensus sequence, where it cleaves and resolves the cruciform DNA. In Neisseria meningitidis serogroup C / serotype 2a (strain ATCC 700532 / DSM 15464 / FAM18), this protein is Holliday junction branch migration complex subunit RuvA.